A 647-amino-acid chain; its full sequence is Epithelial sodium channel subunit beta (647 aa).

The Cytoplasmic segment spans residues 1–57 (MIHGKMKRLKRYFTRALHRIQKGPGYTYKELLVWFCDNTNTHGPKRIIKEGPKKRVM). Residues 58-78 (WFILTLVFAGLVFWQWGVLIL) traverse the membrane as a helical segment. The Extracellular segment spans residues 79–552 (TYLSYGVSVS…GGQFGFWMGG (474 aa)). Intrachain disulfides connect C104–C291, C215–C222, C268–C275, C381–C468, C406–C464, C410–C460, C419–C446, and C421–C435. A helical membrane pass occupies residues 553–573 (SVLCIIEFGEIIIDCMWITIL). The Cytoplasmic portion of the chain corresponds to 574-647 (KFLAWSRNRR…AEPVSSDEEN (74 aa)). The tract at residues 586–647 (RKRPQYSDPP…AEPVSSDEEN (62 aa)) is disordered.

Belongs to the amiloride-sensitive sodium channel (TC 1.A.6) family. SCNN1B subfamily. In terms of assembly, component of the heterotrimeric epithelial sodium channel (ENaC) composed of an alpha/SCNN1A, a beta/SCNN1B and a gamma/SCNN1G subunit.

It is found in the apical cell membrane. The protein resides in the cytoplasmic vesicle membrane. It catalyses the reaction Na(+)(in) = Na(+)(out). Its activity is regulated as follows. Originally identified and characterized by its inhibition by the diuretic drug amiloride. Its function is as follows. This is one of the three pore-forming subunits of the heterotrimeric epithelial sodium channel (ENaC), a critical regulator of sodium balance and fluid homeostasis. ENaC operates in epithelial tissues, where it mediates the electrodiffusion of sodium ions from extracellular fluid through the apical membrane of cells, with water following osmotically. The protein is Epithelial sodium channel subunit beta (scnn1b-a) of Xenopus laevis (African clawed frog).